Consider the following 370-residue polypeptide: Pantothenate kinase 3 (370 aa).

Catalysis depends on E138, which acts as the Proton acceptor. Acetyl-CoA-binding residues include S192, S195, and R207.

The protein belongs to the type II pantothenate kinase family. Homodimer. In terms of tissue distribution, highly expressed in the liver.

It localises to the cytoplasm. The catalysed reaction is (R)-pantothenate + ATP = (R)-4'-phosphopantothenate + ADP + H(+). It participates in cofactor biosynthesis; coenzyme A biosynthesis; CoA from (R)-pantothenate: step 1/5. With respect to regulation, subject to allosteric regulation, exists in two distinct conformational states, a catalytically incompetent (or open) conformation stabilized by the binding of acetyl(acyl)-CoA, and a catalytically competent (or closed) conformation stabilized by ATP-binding. Inhibited by acetyl-CoA and its thioesters which act as allosteric inhibitors and compete with the ATP-binding site. Inhibited by sulfonylureas and thiazolidinediones. Activated by oleoylethanolamide, palmitoyl-carnitine and oleoyl-carnitine. In terms of biological role, catalyzes the phosphorylation of pantothenate to generate 4'-phosphopantothenate in the first and rate-determining step of coenzyme A (CoA) synthesis. The sequence is that of Pantothenate kinase 3 (PANK3) from Homo sapiens (Human).